Consider the following 193-residue polypeptide: Bcl-2-like protein 2 (193 aa).

The residue at position 2 (Ala-2) is an N-acetylalanine. The BH4 signature appears at 9–29 (DTRALVADFVGYKLRQKGYVC). The BH1 signature appears at 85–104 (ELFQGGPNWGRLVAFFVFGA). The BH2 motif lies at 136-151 (DWIHSSGGWAEFTALY).

Belongs to the Bcl-2 family. In terms of assembly, interacts with HIF3A (via C-terminus domain). Interacts with BOP.

It is found in the mitochondrion membrane. Functionally, promotes cell survival. Blocks dexamethasone-induced apoptosis. Mediates survival of postmitotic Sertoli cells by suppressing death-promoting activity of BAX. This chain is Bcl-2-like protein 2 (BCL2L2), found in Bos taurus (Bovine).